Reading from the N-terminus, the 213-residue chain is Glutamine amidotransferase-like class 1 domain-containing protein 1 (213 aa).

Positions 1–20 (MTSKPTCLIVASAASAGVSA) are cleaved as a signal peptide.

Belongs to the peptidase C56 family. Homotetramer. Component of the FERRY complex.

The protein resides in the secreted. It is found in the early endosome. Functionally, component of the FERRY complex (Five-subunit Endosomal Rab5 and RNA/ribosome intermediary). The FERRY complex directly interacts with mRNAs and RAB5A, and functions as a RAB5A effector involved in the localization and the distribution of specific mRNAs most likely by mediating their endosomal transport. The complex recruits mRNAs and ribosomes to early endosomes through direct mRNA-interaction. The sequence is that of Glutamine amidotransferase-like class 1 domain-containing protein 1 from Danio rerio (Zebrafish).